A 400-amino-acid polypeptide reads, in one-letter code: Deoxyguanosinetriphosphate triphosphohydrolase-like protein (400 aa).

In terms of domain architecture, HD spans 76 to 204 (RLTHTLEVAQ…VNIADPLAYC (129 aa)).

This sequence belongs to the dGTPase family. Type 2 subfamily.

This Syntrophus aciditrophicus (strain SB) protein is Deoxyguanosinetriphosphate triphosphohydrolase-like protein.